A 307-amino-acid polypeptide reads, in one-letter code: Glycine--tRNA ligase alpha subunit (307 aa).

Belongs to the class-II aminoacyl-tRNA synthetase family. As to quaternary structure, tetramer of two alpha and two beta subunits.

The protein resides in the cytoplasm. The catalysed reaction is tRNA(Gly) + glycine + ATP = glycyl-tRNA(Gly) + AMP + diphosphate. This is Glycine--tRNA ligase alpha subunit (glyQ) from Xylella fastidiosa (strain 9a5c).